The chain runs to 416 residues: Phosphoglycerate kinase (416 aa).

(2R)-3-phosphoglycerate contacts are provided by V23, D24, F25, N26, Q38, R39, S62, H63, G65, R66, L121, R122, H168, and R169. G212 lines the ADP pocket. A CDP-binding site is contributed by G212. AMP contacts are provided by A213 and K214. Position 213 (A213) interacts with ATP. A213 is a Mg(2+) binding site. The Mg(2+) site is built by A216 and D217. D217 contacts CDP. K218 is an AMP binding site. An ATP-binding site is contributed by K218. G236 contacts ADP. G236 provides a ligand contact to CDP. AMP contacts are provided by G237 and G311. Residues G237 and G311 each coordinate ATP. G336 and F341 together coordinate CDP. F341 contacts ADP. Residue E342 coordinates AMP. ATP contacts are provided by E342, D373, and T374. D373 provides a ligand contact to Mg(2+).

It belongs to the phosphoglycerate kinase family. As to quaternary structure, monomer. The cofactor is Mg(2+).

It localises to the cytoplasm. It is found in the mitochondrion. The catalysed reaction is (2R)-3-phosphoglycerate + ATP = (2R)-3-phospho-glyceroyl phosphate + ADP. The protein operates within carbohydrate degradation; glycolysis; pyruvate from D-glyceraldehyde 3-phosphate: step 2/5. In terms of biological role, catalyzes one of the two ATP producing reactions in the glycolytic pathway via the reversible conversion of 1,3-diphosphoglycerate to 3-phosphoglycerate. Both L- and D- forms of purine and pyrimidine nucleotides can be used as substrates, but the activity is much lower on pyrimidines. Negatively regulates the biosynthesis of acetyl-CoA from pyruvate in the mitochondrion. This Eremothecium gossypii (strain ATCC 10895 / CBS 109.51 / FGSC 9923 / NRRL Y-1056) (Yeast) protein is Phosphoglycerate kinase (PGK1).